Consider the following 245-residue polypeptide: tRNA1(Val) (adenine(37)-N6)-methyltransferase (245 aa).

The protein belongs to the methyltransferase superfamily. tRNA (adenine-N(6)-)-methyltransferase family.

It localises to the cytoplasm. The enzyme catalyses adenosine(37) in tRNA1(Val) + S-adenosyl-L-methionine = N(6)-methyladenosine(37) in tRNA1(Val) + S-adenosyl-L-homocysteine + H(+). In terms of biological role, specifically methylates the adenine in position 37 of tRNA(1)(Val) (anticodon cmo5UAC). The sequence is that of tRNA1(Val) (adenine(37)-N6)-methyltransferase from Klebsiella pneumoniae (strain 342).